A 222-amino-acid polypeptide reads, in one-letter code: Putative N-acetylmannosamine-6-phosphate 2-epimerase (222 aa).

This sequence belongs to the NanE family.

It carries out the reaction an N-acyl-D-glucosamine 6-phosphate = an N-acyl-D-mannosamine 6-phosphate. It participates in amino-sugar metabolism; N-acetylneuraminate degradation; D-fructose 6-phosphate from N-acetylneuraminate: step 3/5. In terms of biological role, converts N-acetylmannosamine-6-phosphate (ManNAc-6-P) to N-acetylglucosamine-6-phosphate (GlcNAc-6-P). This chain is Putative N-acetylmannosamine-6-phosphate 2-epimerase, found in Staphylococcus aureus (strain Mu3 / ATCC 700698).